Reading from the N-terminus, the 37-residue chain is Large ribosomal subunit protein bL36 (37 aa).

The protein belongs to the bacterial ribosomal protein bL36 family.

This chain is Large ribosomal subunit protein bL36, found in Mycoplasmopsis pulmonis (strain UAB CTIP) (Mycoplasma pulmonis).